The sequence spans 187 residues: Mast cell-expressed membrane protein 1 (187 aa).

At 1–85 (MEVEEIYKHQ…PCWLYRAILS (85 aa)) the chain is on the cytoplasmic side. The tract at residues 49–71 (DHAKGGHSRPTSQVPAQCRPPSD) is disordered. The helical; Signal-anchor for type II membrane protein transmembrane segment at 86-106 (LYILLALAFVLCIILSAFIMV) threads the bilayer. At 107–187 (KNAEMSKELL…LQKMPQSSPQ (81 aa)) the chain is on the extracellular side. N-linked (GlcNAc...) asparagine glycosylation is present at Asn-124.

In terms of tissue distribution, expressed specifically in mast cells. Found primarily in lung.

It is found in the membrane. This Homo sapiens (Human) protein is Mast cell-expressed membrane protein 1.